A 277-amino-acid chain; its full sequence is F-actin-capping protein subunit beta isoforms 1 and 2 (277 aa).

Serine 2 carries the post-translational modification N-acetylserine.

Belongs to the F-actin-capping protein beta subunit family. In terms of assembly, component of the F-actin capping complex, composed of a heterodimer of an alpha and a beta subunit. Component of the WASH complex. Component of the F-actin capping complex, composed of a heterodimer of an alpha and a beta subunit. Subunit of dynactin, a multiprotein complex part of a tripartite complex with dynein and a adapter, such as BICDL1, BICD2 or HOOK3. The dynactin complex is built around ACTR1A/ACTB filament and consists of an actin-related filament composed of a shoulder domain, a pointed end and a barbed end. Its length is defined by its flexible shoulder domain. Isoform 1 is detected in pectoral muscle, cardiac muscle and gizzard. Isoform 2 is detected in brain and liver (at protein level). Isoform 2 is the predominant isoform of nonmuscle tissues and isoform 1 is the predominant isoform of muscle tissues.

The protein localises to the cytoplasm. It localises to the myofibril. It is found in the sarcomere. The protein resides in the z line. Its subcellular location is the i band. The protein localises to the cytoskeleton. In terms of biological role, F-actin-capping proteins bind in a Ca(2+)-independent manner to the fast growing ends of actin filaments (barbed end) thereby blocking the exchange of subunits at these ends. Unlike other capping proteins (such as gelsolin and severin), these proteins do not sever actin filaments. May play a role in the regulation of cell morphology and cytoskeletal organization. Functionally, forms, with CAPZB, the barbed end of the fast growing ends of actin filaments in the dynactin complex and stabilizes dynactin structure. The dynactin multiprotein complex activates the molecular motor dynein for ultra-processive transport along microtubules. This chain is F-actin-capping protein subunit beta isoforms 1 and 2 (CAPZB), found in Gallus gallus (Chicken).